Consider the following 682-residue polypeptide: Potassium-transporting ATPase ATP-binding subunit (682 aa).

The next 4 helical transmembrane spans lie at 35–55 (VMFI…AMAG), 62–82 (ATFT…ANFA), 219–239 (IALT…TATI), and 254–274 (VLVA…LSAI). Aspartate 307 functions as the 4-aspartylphosphate intermediate in the catalytic mechanism. ATP-binding positions include aspartate 344, glutamate 348, 377 to 384 (FTAQTRMS), and lysine 395. The Mg(2+) site is built by aspartate 518 and aspartate 522. 3 helical membrane passes run 588–608 (FAII…LNVM), 616–636 (AILS…PLAL), and 656–676 (IYGL…DLLL).

It belongs to the cation transport ATPase (P-type) (TC 3.A.3) family. Type IA subfamily. In terms of assembly, the system is composed of three essential subunits: KdpA, KdpB and KdpC.

The protein localises to the cell inner membrane. It catalyses the reaction K(+)(out) + ATP + H2O = K(+)(in) + ADP + phosphate + H(+). Functionally, part of the high-affinity ATP-driven potassium transport (or Kdp) system, which catalyzes the hydrolysis of ATP coupled with the electrogenic transport of potassium into the cytoplasm. This subunit is responsible for energy coupling to the transport system and for the release of the potassium ions to the cytoplasm. This chain is Potassium-transporting ATPase ATP-binding subunit, found in Klebsiella pneumoniae (strain 342).